A 410-amino-acid polypeptide reads, in one-letter code: WD repeat and FYVE domain-containing protein 1 (410 aa).

6 WD repeats span residues 22-61 (GHQDAVTAALLIPKEDGVITASEDRTIRVWLKRDSGQYWP), 66-105 (TMASPCSAMAYHHDSRRIFVGQDNGAVMEFHVSEDFNKMN), 112-150 (AHQNRVSAIIFSLAAEWVISTGHDKCVSWMCTRSGNMLG), 153-192 (FFSSWASCLQYDLDTQHAFVGDYSGQITLLKLEQNTCSVI), 197-236 (GHEGSIACLWWDPIQRLLFSGASDNSVIMWDIGGRKGRTL), and 240-279 (GHHDRVQSLCYLQLTRQLVSCSADGGIAVWNMDVSREEAP). An FYVE-type zinc finger spans residues 281 to 352 (WLESDSCQKC…VCDSCYDSIK (72 aa)). Cys287, Cys290, Cys314, Cys317, Cys322, Cys325, Cys344, and Cys347 together coordinate Zn(2+). Residues 364–403 (EGKHNISHMSMDIARGLMVTCGTDRVVKIWDMTPVVGCSL) form a WD 7 repeat. Ser408 carries the phosphoserine modification.

In terms of assembly, binds PtdIns3P in vitro with high specificity over other phosphoinositides. Interacts (via WD repeat 2) with tyrosine-phosphorylated TLR3 (via TIR domain) in response to poly(I:C). Interacts with TLR4 in response to LPS. Interacts with TICAM1 in response to poly(I:C).

Its subcellular location is the early endosome. Its function is as follows. Positively regulates TLR3- and TLR4-mediated signaling pathways by bridging the interaction between TLR3 or TLR4 and TICAM1. Promotes TLR3/4 ligand-induced activation of transcription factors IRF3 and NF-kappa-B, as well as the production of IFN-beta and inflammatory cytokines. This is WD repeat and FYVE domain-containing protein 1 (Wdfy1) from Mus musculus (Mouse).